The primary structure comprises 728 residues: Catalase-peroxidase 1 (728 aa).

The segment at residues 91–218 is a cross-link (tryptophyl-tyrosyl-methioninium (Trp-Tyr) (with M-244)); that stretch reads WHSAGTYRIA…LAAVQMGLIY (128 aa). The active-site Proton acceptor is the H92. A cross-link (tryptophyl-tyrosyl-methioninium (Tyr-Met) (with W-91)) is located at residues 218–244; it reads YVNPEGPDGNPDPVAAARDIRDTFARM. Heme b is bound at residue H259.

Belongs to the peroxidase family. Peroxidase/catalase subfamily. Homodimer or homotetramer. The cofactor is heme b. Post-translationally, formation of the three residue Trp-Tyr-Met cross-link is important for the catalase, but not the peroxidase activity of the enzyme.

The enzyme catalyses H2O2 + AH2 = A + 2 H2O. The catalysed reaction is 2 H2O2 = O2 + 2 H2O. Bifunctional enzyme with both catalase and broad-spectrum peroxidase activity. The chain is Catalase-peroxidase 1 from Burkholderia ambifaria (strain ATCC BAA-244 / DSM 16087 / CCUG 44356 / LMG 19182 / AMMD) (Burkholderia cepacia (strain AMMD)).